Consider the following 235-residue polypeptide: Transmembrane protein 215 (235 aa).

Transmembrane regions (helical) follow at residues L12–M32 and I40–A60. The interval S99 to C146 is disordered.

The protein resides in the membrane. This chain is Transmembrane protein 215 (Tmem215), found in Mus musculus (Mouse).